The chain runs to 278 residues: Biotin synthase (278 aa).

Positions 1 to 227 constitute a Radical SAM core domain; it reads MQIMLCAISN…QSVVMVAGGR (227 aa). [4Fe-4S] cluster is bound by residues Cys-16, Cys-20, and Cys-23. The [2Fe-2S] cluster site is built by Cys-60, Cys-95, and Cys-153.

This sequence belongs to the radical SAM superfamily. Biotin synthase family. As to quaternary structure, homodimer. [4Fe-4S] cluster serves as cofactor. It depends on [2Fe-2S] cluster as a cofactor.

The enzyme catalyses (4R,5S)-dethiobiotin + (sulfur carrier)-SH + 2 reduced [2Fe-2S]-[ferredoxin] + 2 S-adenosyl-L-methionine = (sulfur carrier)-H + biotin + 2 5'-deoxyadenosine + 2 L-methionine + 2 oxidized [2Fe-2S]-[ferredoxin]. Its pathway is cofactor biosynthesis; biotin biosynthesis; biotin from 7,8-diaminononanoate: step 2/2. Its function is as follows. Catalyzes the conversion of dethiobiotin (DTB) to biotin by the insertion of a sulfur atom into dethiobiotin via a radical-based mechanism. The protein is Biotin synthase of Campylobacter jejuni (strain RM1221).